Here is a 283-residue protein sequence, read N- to C-terminus: Protein/nucleic acid deglycase HchA (283 aa).

Residues His-86, Glu-91, and His-123 each contribute to the Zn(2+) site. Cys-185 acts as the Nucleophile in catalysis.

The protein belongs to the peptidase C56 family. HchA subfamily. Homodimer.

The protein resides in the cytoplasm. The enzyme catalyses N(omega)-(1-hydroxy-2-oxopropyl)-L-arginyl-[protein] + H2O = lactate + L-arginyl-[protein] + H(+). The catalysed reaction is N(6)-(1-hydroxy-2-oxopropyl)-L-lysyl-[protein] + H2O = lactate + L-lysyl-[protein] + H(+). It catalyses the reaction S-(1-hydroxy-2-oxopropyl)-L-cysteinyl-[protein] + H2O = lactate + L-cysteinyl-[protein] + H(+). It carries out the reaction N(omega)-(1-hydroxy-2-oxoethyl)-L-arginyl-[protein] + H2O = L-arginyl-[protein] + glycolate + H(+). The enzyme catalyses N(6)-(1-hydroxy-2-oxoethyl)-L-lysyl-[protein] + H2O = glycolate + L-lysyl-[protein] + H(+). The catalysed reaction is S-(1-hydroxy-2-oxoethyl)-L-cysteinyl-[protein] + H2O = glycolate + L-cysteinyl-[protein] + H(+). It catalyses the reaction N(2)-(1-hydroxy-2-oxopropyl)-dGTP + H2O = lactate + dGTP + H(+). It carries out the reaction N(2)-(1-hydroxy-2-oxopropyl)-GTP + H2O = lactate + GTP + H(+). The enzyme catalyses N(2)-(1-hydroxy-2-oxopropyl)-GDP + H2O = lactate + GDP + H(+). The catalysed reaction is N(2)-(1-hydroxy-2-oxopropyl)-GMP + H2O = lactate + GMP + H(+). It catalyses the reaction N(2)-(1-hydroxy-2-oxoethyl)-dGTP + H2O = dGTP + glycolate + H(+). It carries out the reaction N(2)-(1-hydroxy-2-oxoethyl)-GTP + H2O = glycolate + GTP + H(+). The enzyme catalyses N(2)-(1-hydroxy-2-oxoethyl)-GDP + H2O = glycolate + GDP + H(+). The catalysed reaction is N(2)-(1-hydroxy-2-oxoethyl)-GMP + H2O = glycolate + GMP + H(+). It catalyses the reaction an N(2)-(1-hydroxy-2-oxopropyl)-guanosine in RNA + H2O = a guanosine in RNA + lactate + H(+). It carries out the reaction an N(2)-(1-hydroxy-2-oxopropyl)-2'-deoxyguanosine in DNA + H2O = a 2'-deoxyguanosine in DNA + lactate + H(+). The enzyme catalyses an N(2)-(1-hydroxy-2-oxoethyl)-guanosine in RNA + H2O = a guanosine in RNA + glycolate + H(+). The catalysed reaction is an N(2)-(1-hydroxy-2-oxoethyl)-2'-deoxyguanosine in DNA + H2O = a 2'-deoxyguanosine in DNA + glycolate + H(+). Its function is as follows. Protein and nucleotide deglycase that catalyzes the deglycation of the Maillard adducts formed between amino groups of proteins or nucleotides and reactive carbonyl groups of glyoxals. Thus, functions as a protein deglycase that repairs methylglyoxal- and glyoxal-glycated proteins, and releases repaired proteins and lactate or glycolate, respectively. Deglycates cysteine, arginine and lysine residues in proteins, and thus reactivates these proteins by reversing glycation by glyoxals. Acts on early glycation intermediates (hemithioacetals and aminocarbinols), preventing the formation of Schiff bases and advanced glycation endproducts (AGE). Also functions as a nucleotide deglycase able to repair glycated guanine in the free nucleotide pool (GTP, GDP, GMP, dGTP) and in DNA and RNA. Is thus involved in a major nucleotide repair system named guanine glycation repair (GG repair), dedicated to reversing methylglyoxal and glyoxal damage via nucleotide sanitization and direct nucleic acid repair. Plays an important role in protecting cells from carbonyl stress. The polypeptide is Protein/nucleic acid deglycase HchA (Escherichia coli O45:K1 (strain S88 / ExPEC)).